The chain runs to 290 residues: 33 kDa chaperonin (290 aa).

Cystine bridges form between Cys235–Cys237 and Cys268–Cys271.

Belongs to the HSP33 family. Under oxidizing conditions two disulfide bonds are formed involving the reactive cysteines. Under reducing conditions zinc is bound to the reactive cysteines and the protein is inactive.

It localises to the cytoplasm. Redox regulated molecular chaperone. Protects both thermally unfolding and oxidatively damaged proteins from irreversible aggregation. Plays an important role in the bacterial defense system toward oxidative stress. This Streptococcus pyogenes serotype M49 protein is 33 kDa chaperonin.